We begin with the raw amino-acid sequence, 439 residues long: Proline--tRNA ligase (439 aa).

This sequence belongs to the class-II aminoacyl-tRNA synthetase family. ProS type 2 subfamily. In terms of assembly, homodimer.

It localises to the cytoplasm. It catalyses the reaction tRNA(Pro) + L-proline + ATP = L-prolyl-tRNA(Pro) + AMP + diphosphate. Its function is as follows. Catalyzes the attachment of proline to tRNA(Pro) in a two-step reaction: proline is first activated by ATP to form Pro-AMP and then transferred to the acceptor end of tRNA(Pro). This Rhodopseudomonas palustris (strain HaA2) protein is Proline--tRNA ligase.